Here is a 589-residue protein sequence, read N- to C-terminus: 2-succinyl-5-enolpyruvyl-6-hydroxy-3-cyclohexene-1-carboxylate synthase (589 aa).

The disordered stretch occupies residues 198–222; that stretch reads DAATTEGAHDSHAPSQPTRGPRKLP.

Belongs to the TPP enzyme family. MenD subfamily. Homodimer. It depends on Mg(2+) as a cofactor. Requires Mn(2+) as cofactor. Thiamine diphosphate is required as a cofactor.

The catalysed reaction is isochorismate + 2-oxoglutarate + H(+) = 5-enolpyruvoyl-6-hydroxy-2-succinyl-cyclohex-3-ene-1-carboxylate + CO2. The protein operates within quinol/quinone metabolism; 1,4-dihydroxy-2-naphthoate biosynthesis; 1,4-dihydroxy-2-naphthoate from chorismate: step 2/7. Its pathway is quinol/quinone metabolism; menaquinone biosynthesis. Functionally, catalyzes the thiamine diphosphate-dependent decarboxylation of 2-oxoglutarate and the subsequent addition of the resulting succinic semialdehyde-thiamine pyrophosphate anion to isochorismate to yield 2-succinyl-5-enolpyruvyl-6-hydroxy-3-cyclohexene-1-carboxylate (SEPHCHC). The chain is 2-succinyl-5-enolpyruvyl-6-hydroxy-3-cyclohexene-1-carboxylate synthase from Corynebacterium jeikeium (strain K411).